The chain runs to 1141 residues: Probable ubiquitin carboxyl-terminal hydrolase 2 (1141 aa).

A Phosphothreonine modification is found at Thr-112. The residue at position 113 (Ser-113) is a Phosphoserine. Position 115 is a phosphothreonine (Thr-115). The region spanning 614 to 1124 is the USP domain; the sequence is IGLENTGNLC…NPYMLTYIRK (511 aa). Residue Cys-623 is the Nucleophile of the active site. The residue at position 721 (Thr-721) is a Phosphothreonine. Ser-722 bears the Phosphoserine mark. The disordered stretch occupies residues 748-770; the sequence is EEQAQGLEQEQGQDEAKSPAEQS. His-1076 (proton acceptor) is an active-site residue.

It belongs to the peptidase C19 family.

It catalyses the reaction Thiol-dependent hydrolysis of ester, thioester, amide, peptide and isopeptide bonds formed by the C-terminal Gly of ubiquitin (a 76-residue protein attached to proteins as an intracellular targeting signal).. This chain is Probable ubiquitin carboxyl-terminal hydrolase 2 (ubp2), found in Schizosaccharomyces pombe (strain 972 / ATCC 24843) (Fission yeast).